Here is a 348-residue protein sequence, read N- to C-terminus: N6-Methyl-AMP deaminase (348 aa).

Zn(2+) contacts are provided by His-18 and His-20. Residues His-20, Asn-22, His-68, 100-103 (STPR), Asp-142, and Gly-175 contribute to the N(6)-methyl-AMP site. His-202 contacts Zn(2+). N(6)-methyl-AMP-binding residues include Glu-205, Asp-287, and Asp-288. Glu-205 serves as the catalytic Proton donor. Zn(2+) is bound at residue Asp-287.

The protein belongs to the metallo-dependent hydrolases superfamily. Adenosine and AMP deaminases family. As to quaternary structure, monomer. Requires Zn(2+) as cofactor.

The enzyme catalyses N(6)-methyl-AMP + H2O + H(+) = IMP + methylamine. In terms of biological role, catalyzes the hydrolysis of the free cytosolic methylated adenosine nucleotide N(6)-methyl-AMP (N6-mAMP) to produce inositol monophosphate (IMP) and methylamine. Is required for the catabolism of cytosolic N6-mAMP, which is derived from the degradation of mRNA containing N6-methylated adenine (m6A). The polypeptide is N6-Methyl-AMP deaminase (mapda) (Danio rerio (Zebrafish)).